The chain runs to 497 residues: 4,4'-diaponeurosporene oxygenase (497 aa).

An FAD-binding site is contributed by valine 7–isoleucine 19.

It belongs to the carotenoid/retinoid oxidoreductase family. CrtP subfamily. The cofactor is FAD.

The catalysed reaction is all-trans-4,4'-diaponeurosporene + 2 AH2 + 2 O2 = 4,4'-diaponeurosporenal + 2 A + 3 H2O. It functions in the pathway carotenoid biosynthesis; staphyloxanthin biosynthesis; staphyloxanthin from farnesyl diphosphate: step 3/5. Its function is as follows. Involved in the biosynthesis of the yellow-orange carotenoid staphyloxanthin, which plays a role in the virulence via its protective function against oxidative stress. Catalyzes the oxidation of the terminal methyl side group of 4,4'-diaponeurosporene to form 4,4'-diaponeurosporen-4-al. The polypeptide is 4,4'-diaponeurosporene oxygenase (Staphylococcus aureus (strain USA300)).